The chain runs to 396 residues: Flavohemoprotein (396 aa).

The 136-residue stretch at 1-136 (MLDAQTIATV…LANVFINREA (136 aa)) folds into the Globin domain. Residue H85 coordinates heme b. Residues Y95 and E135 each act as charge relay system in the active site. Positions 147-396 (GGWEGTRDFR…YECFGPHKVL (250 aa)) are reductase. Residues 150–255 (EGTRDFRIVA…VAPAGDFFMA (106 aa)) enclose the FAD-binding FR-type domain. Residues Y188 and 204–207 (RQYS) contribute to the FAD site. Position 268–273 (268–273 (GVGQTP)) interacts with NADP(+). 389 to 392 (CFGP) lines the FAD pocket.

It belongs to the globin family. Two-domain flavohemoproteins subfamily. This sequence in the C-terminal section; belongs to the flavoprotein pyridine nucleotide cytochrome reductase family. The cofactor is heme b. FAD serves as cofactor.

It carries out the reaction 2 nitric oxide + NADPH + 2 O2 = 2 nitrate + NADP(+) + H(+). It catalyses the reaction 2 nitric oxide + NADH + 2 O2 = 2 nitrate + NAD(+) + H(+). In terms of biological role, is involved in NO detoxification in an aerobic process, termed nitric oxide dioxygenase (NOD) reaction that utilizes O(2) and NAD(P)H to convert NO to nitrate, which protects the bacterium from various noxious nitrogen compounds. Therefore, plays a central role in the inducible response to nitrosative stress. This is Flavohemoprotein from Escherichia coli O6:H1 (strain CFT073 / ATCC 700928 / UPEC).